An 83-amino-acid polypeptide reads, in one-letter code: UPF0512 protein W (83 aa).

It belongs to the UPF0512 family.

The polypeptide is UPF0512 protein W (Dictyostelium discoideum (Social amoeba)).